The sequence spans 114 residues: Ribonuclease P protein component (114 aa).

The protein belongs to the RnpA family. Consists of a catalytic RNA component (M1 or rnpB) and a protein subunit.

The enzyme catalyses Endonucleolytic cleavage of RNA, removing 5'-extranucleotides from tRNA precursor.. In terms of biological role, RNaseP catalyzes the removal of the 5'-leader sequence from pre-tRNA to produce the mature 5'-terminus. It can also cleave other RNA substrates such as 4.5S RNA. The protein component plays an auxiliary but essential role in vivo by binding to the 5'-leader sequence and broadening the substrate specificity of the ribozyme. The sequence is that of Ribonuclease P protein component from Legionella pneumophila (strain Paris).